A 525-amino-acid polypeptide reads, in one-letter code: Eukaryotic translation initiation factor 3 subunit L (525 aa).

Over residues 1–19 (MYTQADEYDGGDAGYEDDY) the composition is skewed to acidic residues. Residues 1-21 (MYTQADEYDGGDAGYEDDYSG) form a disordered region. The PCI domain occupies 296-502 (DAIRCFSSVL…IHIADTKVDR (207 aa)).

This sequence belongs to the eIF-3 subunit L family. As to quaternary structure, component of the eukaryotic translation initiation factor 3 (eIF-3) complex.

The protein resides in the cytoplasm. In terms of biological role, component of the eukaryotic translation initiation factor 3 (eIF-3) complex, which is involved in protein synthesis of a specialized repertoire of mRNAs and, together with other initiation factors, stimulates binding of mRNA and methionyl-tRNAi to the 40S ribosome. The eIF-3 complex specifically targets and initiates translation of a subset of mRNAs involved in cell proliferation. The sequence is that of Eukaryotic translation initiation factor 3 subunit L from Nematostella vectensis (Starlet sea anemone).